The chain runs to 348 residues: Ion-translocating oxidoreductase complex subunit D (348 aa).

5 helical membrane passes run 15 to 35 (LTAKFMLWVMVAMLPALGMQA), 36 to 56 (YFFGYGVFIQVFIALLLAVAI), 67 to 87 (LTAFYVADLSGVLTALILAIS), 88 to 108 (IPPYAPYWIIVIGIIVALLLA), and 125 to 145 (VAYALLLVSFPVQMTGWLVPI). An FMN phosphoryl threonine modification is found at threonine 186. 5 helical membrane passes run 212 to 232 (LFANGWWQINLAFLAGGLLLI), 241 to 261 (IPAAMLGMFALLSGLTDLLLP), 265 to 285 (LNVVSQLFSGAMMFGAFFIAT), 298 to 318 (LIFGGLIGLFVYLIRYYGNYP), and 320 to 340 (AVAFSVLLANICVPLIDHYTQ).

The protein belongs to the NqrB/RnfD family. As to quaternary structure, the complex is composed of six subunits: RnfA, RnfB, RnfC, RnfD, RnfE and RnfG. The cofactor is FMN.

The protein localises to the cell inner membrane. Part of a membrane-bound complex that couples electron transfer with translocation of ions across the membrane. The polypeptide is Ion-translocating oxidoreductase complex subunit D (Actinobacillus pleuropneumoniae serotype 3 (strain JL03)).